Reading from the N-terminus, the 842-residue chain is Alpha-glucan phosphorylase, H isozyme (842 aa).

Position 688 is an N6-(pyridoxal phosphate)lysine (Lys688).

Belongs to the glycogen phosphorylase family. The cofactor is pyridoxal 5'-phosphate.

It is found in the cytoplasm. It catalyses the reaction [(1-&gt;4)-alpha-D-glucosyl](n) + phosphate = [(1-&gt;4)-alpha-D-glucosyl](n-1) + alpha-D-glucose 1-phosphate. Its function is as follows. Phosphorylase is an important allosteric enzyme in carbohydrate metabolism. Enzymes from different sources differ in their regulatory mechanisms and in their natural substrates. However, all known phosphorylases share catalytic and structural properties. The H isoform exhibits higher affinity for branched polyglucans such as soluble starch or glycogen. In Vicia faba (Broad bean), this protein is Alpha-glucan phosphorylase, H isozyme.